The primary structure comprises 273 residues: Dermonecrotic toxin LapSicTox-alphaIB1aiii (273 aa).

Residue His-5 is part of the active site. Mg(2+) is bound by residues Glu-25 and Asp-27. His-41 functions as the Nucleophile in the catalytic mechanism. Disulfide bonds link Cys-45-Cys-51 and Cys-47-Cys-190. Asp-85 provides a ligand contact to Mg(2+). N-linked (GlcNAc...) asparagine glycosylation occurs at Asn-250.

The protein belongs to the arthropod phospholipase D family. Class II subfamily. Requires Mg(2+) as cofactor. In terms of tissue distribution, expressed by the venom gland.

It is found in the secreted. It catalyses the reaction an N-(acyl)-sphingosylphosphocholine = an N-(acyl)-sphingosyl-1,3-cyclic phosphate + choline. It carries out the reaction an N-(acyl)-sphingosylphosphoethanolamine = an N-(acyl)-sphingosyl-1,3-cyclic phosphate + ethanolamine. The catalysed reaction is a 1-acyl-sn-glycero-3-phosphocholine = a 1-acyl-sn-glycero-2,3-cyclic phosphate + choline. The enzyme catalyses a 1-acyl-sn-glycero-3-phosphoethanolamine = a 1-acyl-sn-glycero-2,3-cyclic phosphate + ethanolamine. Its function is as follows. Dermonecrotic toxins cleave the phosphodiester linkage between the phosphate and headgroup of certain phospholipids (sphingolipid and lysolipid substrates), forming an alcohol (often choline) and a cyclic phosphate. This toxin acts on sphingomyelin (SM). It may also act on ceramide phosphoethanolamine (CPE), lysophosphatidylcholine (LPC) and lysophosphatidylethanolamine (LPE), but not on lysophosphatidylserine (LPS), and lysophosphatidylglycerol (LPG). It acts by transphosphatidylation, releasing exclusively cyclic phosphate products as second products. Induces dermonecrosis, hemolysis, increased vascular permeability, edema, inflammatory response, and platelet aggregation. In Loxosceles apachea (Apache recluse spider), this protein is Dermonecrotic toxin LapSicTox-alphaIB1aiii.